A 294-amino-acid chain; its full sequence is 4-hydroxy-tetrahydrodipicolinate synthase (294 aa).

Threonine 45 is a binding site for pyruvate. The active-site Proton donor/acceptor is tyrosine 133. Catalysis depends on lysine 161, which acts as the Schiff-base intermediate with substrate. Isoleucine 203 provides a ligand contact to pyruvate.

Belongs to the DapA family. As to quaternary structure, homotetramer; dimer of dimers.

It is found in the cytoplasm. The enzyme catalyses L-aspartate 4-semialdehyde + pyruvate = (2S,4S)-4-hydroxy-2,3,4,5-tetrahydrodipicolinate + H2O + H(+). Its pathway is amino-acid biosynthesis; L-lysine biosynthesis via DAP pathway; (S)-tetrahydrodipicolinate from L-aspartate: step 3/4. In terms of biological role, catalyzes the condensation of (S)-aspartate-beta-semialdehyde [(S)-ASA] and pyruvate to 4-hydroxy-tetrahydrodipicolinate (HTPA). The sequence is that of 4-hydroxy-tetrahydrodipicolinate synthase from Shewanella sp. (strain W3-18-1).